The following is a 183-amino-acid chain: Endoribonuclease YbeY (183 aa).

Histidine 143, histidine 147, and histidine 153 together coordinate Zn(2+).

It belongs to the endoribonuclease YbeY family. Zn(2+) is required as a cofactor.

Its subcellular location is the cytoplasm. In terms of biological role, single strand-specific metallo-endoribonuclease involved in late-stage 70S ribosome quality control and in maturation of the 3' terminus of the 16S rRNA. The sequence is that of Endoribonuclease YbeY from Rickettsia bellii (strain RML369-C).